The primary structure comprises 90 residues: Small ribosomal subunit protein uS15c (90 aa).

The span at 1–11 (MVKNSFSSVIS) shows a compositional bias: polar residues. The segment at 1–20 (MVKNSFSSVISQEEKKENGG) is disordered.

This sequence belongs to the universal ribosomal protein uS15 family. Part of the 30S ribosomal subunit.

Its subcellular location is the plastid. It is found in the chloroplast. The protein is Small ribosomal subunit protein uS15c (rps15) of Cucumis sativus (Cucumber).